A 308-amino-acid polypeptide reads, in one-letter code: Transcriptional adapter 1-1 (308 aa).

This sequence belongs to the TADA1 family. Component of the Spt-Ada-Gcn5 acetyltransferase (SAGA) complex consisting of wda/Taf5L, Saf6, Taf9, Taf10b, Taf12, Ada1, Spt3, Spt7, Spt20, Sf3b3, Sf3b5, Nipped-A/Tra1, a histone acetyltransferase (HAT) module made up of Gcn5, Ada2b (Isoform B), Ada3 and Sgf29, and a deubiquitinase (DUB) module made up of not/nonstop, Sgf11 and e(y)2 tethered to SAGA by Atxn7. Not a component of the Ada2a-containing ATAC complex.

The protein resides in the nucleus. In terms of biological role, component of the transcription regulatory complex SAGA, a multiprotein complex that activates transcription by remodeling chromatin and mediating histone acetylation and deubiquitination. The SAGA complex predominantly acetylates histone H3. In Drosophila melanogaster (Fruit fly), this protein is Transcriptional adapter 1-1.